The following is a 258-amino-acid chain: UPF0246 protein VS_0505 (258 aa).

This sequence belongs to the UPF0246 family.

The sequence is that of UPF0246 protein VS_0505 from Vibrio atlanticus (strain LGP32) (Vibrio splendidus (strain Mel32)).